Reading from the N-terminus, the 176-residue chain is Cytochrome b (176 aa).

3 helical membrane passes run 33 to 53 (FGSL…FLAM), 77 to 98 (WVLR…YLHV), and 113 to 133 (WNMG…GYVL). Residues His-83 and His-97 each contribute to the heme b site.

This sequence belongs to the cytochrome b family. As to quaternary structure, the cytochrome bc1 complex contains 11 subunits: 3 respiratory subunits (MT-CYB, CYC1 and UQCRFS1), 2 core proteins (UQCRC1 and UQCRC2) and 6 low-molecular weight proteins (UQCRH/QCR6, UQCRB/QCR7, UQCRQ/QCR8, UQCR10/QCR9, UQCR11/QCR10 and a cleavage product of UQCRFS1). This cytochrome bc1 complex then forms a dimer. Heme b is required as a cofactor.

The protein localises to the mitochondrion inner membrane. Component of the ubiquinol-cytochrome c reductase complex (complex III or cytochrome b-c1 complex) that is part of the mitochondrial respiratory chain. The b-c1 complex mediates electron transfer from ubiquinol to cytochrome c. Contributes to the generation of a proton gradient across the mitochondrial membrane that is then used for ATP synthesis. In Nycticeius humeralis (Evening bat), this protein is Cytochrome b (MT-CYB).